The chain runs to 413 residues: Serine/threonine-protein kinase ppk27 (413 aa).

Positions 102 to 403 (WSINTKITST…LKDFNKHGNF (302 aa)) constitute a Protein kinase domain. Residues 108–116 (ITSTEQREV) and Lys-133 contribute to the ATP site. The Proton acceptor role is filled by Asp-231.

It belongs to the protein kinase superfamily. Ser/Thr protein kinase family.

The protein localises to the cytoplasm. The enzyme catalyses L-seryl-[protein] + ATP = O-phospho-L-seryl-[protein] + ADP + H(+). It carries out the reaction L-threonyl-[protein] + ATP = O-phospho-L-threonyl-[protein] + ADP + H(+). The sequence is that of Serine/threonine-protein kinase ppk27 (ppk27) from Schizosaccharomyces pombe (strain 972 / ATCC 24843) (Fission yeast).